A 424-amino-acid polypeptide reads, in one-letter code: Histidine--tRNA ligase (424 aa).

The protein belongs to the class-II aminoacyl-tRNA synthetase family. As to quaternary structure, homodimer.

Its subcellular location is the cytoplasm. It catalyses the reaction tRNA(His) + L-histidine + ATP = L-histidyl-tRNA(His) + AMP + diphosphate + H(+). This chain is Histidine--tRNA ligase, found in Shewanella halifaxensis (strain HAW-EB4).